The chain runs to 674 residues: ATP-dependent DNA helicase Hel308 (674 aa).

ATP-binding positions include Gln27 and 44 to 51 (VPTAAGKT). In terms of domain architecture, Helicase ATP-binding spans 31–197 (IEQFRKGKNI…WLNASLIKSS (167 aa)). A DEAH box motif is present at residues 142–145 (DEIH). Residues 224–411 (DINLLVKETV…PEKVRFNTLA (188 aa)) enclose the Helicase C-terminal domain.

Belongs to the helicase family. Hel308 subfamily. In terms of assembly, monomer.

The enzyme catalyses Couples ATP hydrolysis with the unwinding of duplex DNA by translocating in the 3'-5' direction.. The catalysed reaction is ATP + H2O = ADP + phosphate + H(+). Functionally, DNA-dependent ATPase and 3'-5' DNA helicase that may be involved in repair of stalled replication forks. This is ATP-dependent DNA helicase Hel308 from Thermoplasma volcanium (strain ATCC 51530 / DSM 4299 / JCM 9571 / NBRC 15438 / GSS1).